The chain runs to 178 residues: Signal peptidase complex subunit 2 (178 aa).

The Cytoplasmic portion of the chain corresponds to 1 to 37 (MSSAKPINVYSIPELNQALDEALPSVFARLNYERSYA). The helical transmembrane segment at 38-58 (LLDAKLYIGYSIAVVAGLSFF) threads the bilayer. At 59 to 67 (LDKKFERDQ) the chain is on the lumenal side. Residues 68–88 (IVTYQKLLVGAYFVLSLLFWY) traverse the membrane as a helical segment. Over 89 to 178 (FSRFIEKGTV…HNVLDTKKNE (90 aa)) the chain is Cytoplasmic.

Belongs to the SPCS2 family. As to quaternary structure, component of the signal peptidase complex (SPC) composed of a catalytic subunit SEC11 and three accessory subunits SPC1, SPC2 and SPC3. The complex induces a local thinning of the ER membrane which is used to measure the length of the signal peptide (SP) h-region of protein substrates. This ensures the selectivity of the complex towards h-regions shorter than 18-20 amino acids. SPC associates with the translocon complex. Interacts with SBH1 and SEB2/SBH2.

Its subcellular location is the endoplasmic reticulum membrane. Its function is as follows. Component of the signal peptidase complex (SPC) which catalyzes the cleavage of N-terminal signal sequences from nascent proteins as they are translocated into the lumen of the endoplasmic reticulum. Enhances the enzymatic activity of SPC and facilitates the interactions between different components of the translocation site. This Saccharomyces cerevisiae (strain ATCC 204508 / S288c) (Baker's yeast) protein is Signal peptidase complex subunit 2 (SPC2).